The primary structure comprises 348 residues: Putative S-adenosyl-L-methionine-dependent methyltransferase MRA_3439 (348 aa).

Residues D171 and 200-201 (DL) contribute to the S-adenosyl-L-methionine site.

The protein belongs to the UPF0677 family.

In terms of biological role, exhibits S-adenosyl-L-methionine-dependent methyltransferase activity. This is Putative S-adenosyl-L-methionine-dependent methyltransferase MRA_3439 from Mycobacterium tuberculosis (strain ATCC 25177 / H37Ra).